The primary structure comprises 253 residues: Major prion protein (253 aa).

A signal peptide spans 1-22 (MANLGCWMLVLFVATWSDLGLC). The interaction with ADGRG6 stretch occupies residues 23–38 (KKRPKPGGWNTGGSRY). Positions 23–230 (KKRPKPGGWN…ESQAYYQRGS (208 aa)) are interaction with GRB2, ERI3 and SYN1. Residues 26–108 (PKPGGWNTGG…WNKPSKPKTN (83 aa)) form a disordered region. Tandem repeats lie at residues 51–59 (PQGGGGWGQ), 60–67 (PHGGGWGQ), 68–75 (PHGGGWGQ), 76–83 (PHGGGWGQ), and 84–91 (PHGGGWGQ). Positions 51-91 (PQGGGGWGQPHGGGWGQPHGGGWGQPHGGGWGQPHGGGWGQ) are 5 X 8 AA tandem repeats of P-H-G-G-G-W-G-Q. Residues 52–95 (QGGGGWGQPHGGGWGQPHGGGWGQPHGGGWGQPHGGGWGQGGGT) show a composition bias toward gly residues. Residues histidine 61, glycine 62, glycine 63, histidine 69, glycine 70, glycine 71, histidine 77, glycine 78, glycine 79, histidine 85, glycine 86, and glycine 87 each coordinate Cu(2+). Cysteine 179 and cysteine 214 are joined by a disulfide. N-linked (GlcNAc...) asparagine glycans are attached at residues asparagine 181 and asparagine 197. The GPI-anchor amidated serine moiety is linked to residue serine 230. Residues 231–253 (SMVLFSSPPVILLISFLIFLIVG) constitute a propeptide, removed in mature form.

This sequence belongs to the prion family. As to quaternary structure, monomer and homodimer. Has a tendency to aggregate into amyloid fibrils containing a cross-beta spine, formed by a steric zipper of superposed beta-strands. Soluble oligomers may represent an intermediate stage on the path to fibril formation. Copper binding may promote oligomerization. Interacts with GRB2, APP, ERI3/PRNPIP and SYN1. Mislocalized cytosolically exposed PrP interacts with MGRN1; this interaction alters MGRN1 subcellular location and causes lysosomal enlargement. Interacts with APP. Interacts with KIAA1191. Interacts with ADGRG6.

It localises to the cell membrane. Its subcellular location is the golgi apparatus. Its primary physiological function is unclear. May play a role in neuronal development and synaptic plasticity. May be required for neuronal myelin sheath maintenance. May promote myelin homeostasis through acting as an agonist for ADGRG6 receptor. May play a role in iron uptake and iron homeostasis. Soluble oligomers are toxic to cultured neuroblastoma cells and induce apoptosis (in vitro). Association with GPC1 (via its heparan sulfate chains) targets PRNP to lipid rafts. Also provides Cu(2+) or Zn(2+) for the ascorbate-mediated GPC1 deaminase degradation of its heparan sulfate side chains. The protein is Major prion protein (PRNP) of Gorilla gorilla gorilla (Western lowland gorilla).